We begin with the raw amino-acid sequence, 309 residues long: Porphobilinogen deaminase (309 aa).

Cys-242 carries the post-translational modification S-(dipyrrolylmethanemethyl)cysteine.

Belongs to the HMBS family. As to quaternary structure, monomer. Dipyrromethane serves as cofactor.

The enzyme catalyses 4 porphobilinogen + H2O = hydroxymethylbilane + 4 NH4(+). Its pathway is porphyrin-containing compound metabolism; protoporphyrin-IX biosynthesis; coproporphyrinogen-III from 5-aminolevulinate: step 2/4. Functionally, tetrapolymerization of the monopyrrole PBG into the hydroxymethylbilane pre-uroporphyrinogen in several discrete steps. The sequence is that of Porphobilinogen deaminase from Legionella pneumophila (strain Lens).